Reading from the N-terminus, the 266-residue chain is Thiazole synthase (266 aa).

The Schiff-base intermediate with DXP role is filled by lysine 106. 1-deoxy-D-xylulose 5-phosphate contacts are provided by residues glycine 167, alanine 193–glycine 194, and asparagine 215–threonine 216.

The protein belongs to the ThiG family. Homotetramer. Forms heterodimers with either ThiH or ThiS.

Its subcellular location is the plastid. It localises to the chloroplast. It catalyses the reaction [ThiS sulfur-carrier protein]-C-terminal-Gly-aminoethanethioate + 2-iminoacetate + 1-deoxy-D-xylulose 5-phosphate = [ThiS sulfur-carrier protein]-C-terminal Gly-Gly + 2-[(2R,5Z)-2-carboxy-4-methylthiazol-5(2H)-ylidene]ethyl phosphate + 2 H2O + H(+). Its pathway is cofactor biosynthesis; thiamine diphosphate biosynthesis. Functionally, catalyzes the rearrangement of 1-deoxy-D-xylulose 5-phosphate (DXP) to produce the thiazole phosphate moiety of thiamine. Sulfur is provided by the thiocarboxylate moiety of the carrier protein ThiS. In vitro, sulfur can be provided by H(2)S. This chain is Thiazole synthase, found in Cyanidium caldarium (Red alga).